Consider the following 116-residue polypeptide: Ribosome-binding factor A (116 aa).

The protein belongs to the RbfA family. In terms of assembly, monomer. Binds 30S ribosomal subunits, but not 50S ribosomal subunits or 70S ribosomes.

It is found in the cytoplasm. Its function is as follows. One of several proteins that assist in the late maturation steps of the functional core of the 30S ribosomal subunit. Associates with free 30S ribosomal subunits (but not with 30S subunits that are part of 70S ribosomes or polysomes). Required for efficient processing of 16S rRNA. May interact with the 5'-terminal helix region of 16S rRNA. The polypeptide is Ribosome-binding factor A (Streptococcus pyogenes serotype M5 (strain Manfredo)).